We begin with the raw amino-acid sequence, 113 residues long: Small ribosomal subunit protein bS6 (113 aa).

It belongs to the bacterial ribosomal protein bS6 family.

Its function is as follows. Binds together with bS18 to 16S ribosomal RNA. In Buchnera aphidicola subsp. Schizaphis graminum (strain Sg), this protein is Small ribosomal subunit protein bS6.